The sequence spans 448 residues: tRNA(Ile)-lysidine synthase (448 aa).

30 to 35 (GGGADS) contacts ATP.

The protein belongs to the tRNA(Ile)-lysidine synthase family.

The protein resides in the cytoplasm. It catalyses the reaction cytidine(34) in tRNA(Ile2) + L-lysine + ATP = lysidine(34) in tRNA(Ile2) + AMP + diphosphate + H(+). Its function is as follows. Ligates lysine onto the cytidine present at position 34 of the AUA codon-specific tRNA(Ile) that contains the anticodon CAU, in an ATP-dependent manner. Cytidine is converted to lysidine, thus changing the amino acid specificity of the tRNA from methionine to isoleucine. The protein is tRNA(Ile)-lysidine synthase of Idiomarina loihiensis (strain ATCC BAA-735 / DSM 15497 / L2-TR).